A 213-amino-acid polypeptide reads, in one-letter code: Ras-related protein Rab-25 (213 aa).

GTP is bound by residues Ser-21, Gly-24, Lys-25, Thr-26, Asn-27, Ser-38, His-39, Thr-43, and Thr-44. Position 26 (Thr-26) interacts with Mg(2+). Short sequence motifs (switch) lie at residues 35 to 49 (NEFS…GVEF) and 67 to 84 (DTAG…YYRG). Mg(2+)-binding residues include Thr-44 and Asp-67. Residues Gly-70, Asn-125, Lys-126, Asp-128, Ala-156, and Leu-157 each contribute to the GTP site. 2 S-geranylgeranyl cysteine lipidation sites follow: Cys-209 and Cys-210. Cys-210 carries the post-translational modification Cysteine methyl ester. Positions 211 to 213 (ISL) are cleaved as a propeptide — removed in mature form.

It belongs to the small GTPase superfamily. Rab family. Interacts (GTP-bound form) with RAB11FIP1, RAB11FIP2, RAB11FIP3 and RAB11FIP4. Interacts (via the hypervariable C-terminal region) with ITGB1 (via the cytoplasmic region); the interaction is GTP-dependent. Interacts with ITGAV. Associates with the integrin alpha-V/beta-1 heterodimer. Interacts with VPS33B. Requires Mg(2+) as cofactor.

The protein resides in the cell membrane. The protein localises to the cell projection. Its subcellular location is the pseudopodium membrane. It is found in the cytoplasmic vesicle. It catalyses the reaction GTP + H2O = GDP + phosphate + H(+). With respect to regulation, regulated by guanine nucleotide exchange factors (GEFs) which promote the exchange of bound GDP for free GTP. Regulated by GTPase activating proteins (GAPs) which increase the GTP hydrolysis activity. Inhibited by GDP dissociation inhibitors (GDIs) which prevent Rab-GDP dissociation. Its function is as follows. The small GTPases Rab are key regulators of intracellular membrane trafficking, from the formation of transport vesicles to their fusion with membranes. Rabs cycle between an inactive GDP-bound form and an active GTP-bound form that is able to recruit to membranes different set of downstream effectors directly responsible for vesicle formation, movement, tethering and fusion. RAB25 regulates epithelial cell differentiation, proliferation and survival, thereby playing key roles in tumorigenesis. Promotes invasive migration of cells in which it functions to localize and maintain integrin alpha-V/beta-1 at the tips of extending pseudopodia. Involved in the regulation of epithelial morphogenesis through the control of CLDN4 expression and localization at tight junctions. May selectively regulate the apical recycling pathway. Together with MYO5B regulates transcytosis. In Canis lupus familiaris (Dog), this protein is Ras-related protein Rab-25 (RAB25).